Reading from the N-terminus, the 111-residue chain is Ribosome-binding factor A (111 aa).

Belongs to the RbfA family. Monomer. Binds 30S ribosomal subunits, but not 50S ribosomal subunits or 70S ribosomes.

The protein localises to the cytoplasm. Functionally, one of several proteins that assist in the late maturation steps of the functional core of the 30S ribosomal subunit. Associates with free 30S ribosomal subunits (but not with 30S subunits that are part of 70S ribosomes or polysomes). Required for efficient processing of 16S rRNA. May interact with the 5'-terminal helix region of 16S rRNA. The chain is Ribosome-binding factor A from Helicobacter pylori (strain G27).